The following is a 185-amino-acid chain: Elongation factor P (185 aa).

Belongs to the elongation factor P family.

It localises to the cytoplasm. Its pathway is protein biosynthesis; polypeptide chain elongation. Its function is as follows. Involved in peptide bond synthesis. Stimulates efficient translation and peptide-bond synthesis on native or reconstituted 70S ribosomes in vitro. Probably functions indirectly by altering the affinity of the ribosome for aminoacyl-tRNA, thus increasing their reactivity as acceptors for peptidyl transferase. This chain is Elongation factor P, found in Streptococcus uberis (strain ATCC BAA-854 / 0140J).